The chain runs to 110 residues: Cytochrome c (110 aa).

Residues C21, C24, H25, and M87 each coordinate heme c.

This sequence belongs to the cytochrome c family. Binds 1 heme c group covalently per subunit.

Its subcellular location is the mitochondrion intermembrane space. Its function is as follows. Electron carrier protein. The oxidized form of the cytochrome c heme group can accept an electron from the heme group of the cytochrome c1 subunit of cytochrome reductase. Cytochrome c then transfers this electron to the cytochrome oxidase complex, the final protein carrier in the mitochondrial electron-transport chain. This Kluyveromyces lactis (strain ATCC 8585 / CBS 2359 / DSM 70799 / NBRC 1267 / NRRL Y-1140 / WM37) (Yeast) protein is Cytochrome c (CYCK).